The sequence spans 348 residues: RNA 3'-terminal phosphate cyclase (348 aa).

ATP-binding positions include Q102 and H285 to D288. H311 functions as the Tele-AMP-histidine intermediate in the catalytic mechanism.

Belongs to the RNA 3'-terminal cyclase family. Type 1 subfamily.

Its subcellular location is the cytoplasm. The catalysed reaction is a 3'-end 3'-phospho-ribonucleotide-RNA + ATP = a 3'-end 2',3'-cyclophospho-ribonucleotide-RNA + AMP + diphosphate. Catalyzes the conversion of 3'-phosphate to a 2',3'-cyclic phosphodiester at the end of RNA. The mechanism of action of the enzyme occurs in 3 steps: (A) adenylation of the enzyme by ATP; (B) transfer of adenylate to an RNA-N3'P to produce RNA-N3'PP5'A; (C) and attack of the adjacent 2'-hydroxyl on the 3'-phosphorus in the diester linkage to produce the cyclic end product. The biological role of this enzyme is unknown but it is likely to function in some aspects of cellular RNA processing. The chain is RNA 3'-terminal phosphate cyclase from Korarchaeum cryptofilum (strain OPF8).